The primary structure comprises 502 residues: Probable cytosol aminopeptidase (502 aa).

Mn(2+)-binding residues include Lys-269 and Asp-274. Lys-281 is an active-site residue. Mn(2+) is bound by residues Asp-292, Asp-351, and Glu-353. Arg-355 is a catalytic residue.

Belongs to the peptidase M17 family. Mn(2+) serves as cofactor.

Its subcellular location is the cytoplasm. It carries out the reaction Release of an N-terminal amino acid, Xaa-|-Yaa-, in which Xaa is preferably Leu, but may be other amino acids including Pro although not Arg or Lys, and Yaa may be Pro. Amino acid amides and methyl esters are also readily hydrolyzed, but rates on arylamides are exceedingly low.. The enzyme catalyses Release of an N-terminal amino acid, preferentially leucine, but not glutamic or aspartic acids.. Presumably involved in the processing and regular turnover of intracellular proteins. Catalyzes the removal of unsubstituted N-terminal amino acids from various peptides. The sequence is that of Probable cytosol aminopeptidase from Vibrio vulnificus (strain CMCP6).